The following is a 933-amino-acid chain: Protein FAM83G (933 aa).

Disordered regions lie at residues 339–375 (KSASDTGAEKEKNSSNCNNMATKPKPKPTEQPPQEQK), 450–716 (TECQ…SSSV), 870–899 (WGPSHAANQPSPLTSNPMPAEHPSTPFGIP), and 911–933 (TKMGASNLDSRRRGHGYLGHKDQ). Polar residues predominate over residues 452–466 (CQKGSETSQEQTSSK). 2 stretches are compositionally biased toward basic and acidic residues: residues 467-480 (VETHEPYSEKEKSG) and 503-514 (SKVDQGRMEHSP). Composition is skewed to polar residues over residues 515–531 (SKATSLTQVSQQNQSMD) and 538–580 (SPSQ…SSVA). Over residues 590–609 (KEPVKDTVDELEDTSIKDPP) the composition is skewed to basic and acidic residues. Residues 651–660 (KNAQNANIGS) show a composition bias toward polar residues. Low complexity predominate over residues 702–716 (SSGSGSLPPSSSSSV). Residues 875–886 (AANQPSPLTSNP) show a composition bias toward polar residues.

Belongs to the FAM83 family. As to quaternary structure, interacts with SMAD1 (via MH2 domain); in a SMAD4-independent manner.

It localises to the cytoplasm. Its subcellular location is the cytosol. The protein localises to the nucleus. Its function is as follows. Substrate for type I BMP receptor kinase involved in regulation of some target genes of the BMP signaling pathway. May also play a role in other signaling pathways. In Xenopus laevis (African clawed frog), this protein is Protein FAM83G (fam83g).